Here is a 350-residue protein sequence, read N- to C-terminus: tRNA pseudouridine synthase D (350 aa).

The active-site Nucleophile is the D85. In terms of domain architecture, TRUD spans 160–310 (GVINYFGEQR…EAARRTILLR (151 aa)).

It belongs to the pseudouridine synthase TruD family.

The enzyme catalyses uridine(13) in tRNA = pseudouridine(13) in tRNA. Responsible for synthesis of pseudouridine from uracil-13 in transfer RNAs. This is tRNA pseudouridine synthase D from Idiomarina loihiensis (strain ATCC BAA-735 / DSM 15497 / L2-TR).